The chain runs to 107 residues: Theromyzin (107 aa).

An N-terminal signal peptide occupies residues 1–21 (MHAKIILALFLGMTAFLAVQA).

In terms of tissue distribution, coelomic liquid (at protein level). Expressed in large fat cells in contact with coelomic cavities, in intestinal epithelia and at the epidermis level.

It localises to the secreted. Functionally, has bacteriostatic activity against M.luteus. No activity toward E.coli and F.oxysporum. The chain is Theromyzin from Theromyzon tessulatum (Duck leech).